Reading from the N-terminus, the 731-residue chain is 1,4-alpha-glucan branching enzyme GlgB (731 aa).

Asp-408 functions as the Nucleophile in the catalytic mechanism. Residue Glu-461 is the Proton donor of the active site.

The protein belongs to the glycosyl hydrolase 13 family. GlgB subfamily. In terms of assembly, monomer.

The catalysed reaction is Transfers a segment of a (1-&gt;4)-alpha-D-glucan chain to a primary hydroxy group in a similar glucan chain.. It functions in the pathway glycan biosynthesis; glycogen biosynthesis. In terms of biological role, catalyzes the formation of the alpha-1,6-glucosidic linkages in glycogen by scission of a 1,4-alpha-linked oligosaccharide from growing alpha-1,4-glucan chains and the subsequent attachment of the oligosaccharide to the alpha-1,6 position. The chain is 1,4-alpha-glucan branching enzyme GlgB from Corynebacterium efficiens (strain DSM 44549 / YS-314 / AJ 12310 / JCM 11189 / NBRC 100395).